Here is a 234-residue protein sequence, read N- to C-terminus: Probable chemoreceptor glutamine deamidase CheD (234 aa).

This sequence belongs to the CheD family.

The enzyme catalyses L-glutaminyl-[protein] + H2O = L-glutamyl-[protein] + NH4(+). Probably deamidates glutamine residues to glutamate on methyl-accepting chemotaxis receptors (MCPs), playing an important role in chemotaxis. This Burkholderia mallei (strain NCTC 10247) protein is Probable chemoreceptor glutamine deamidase CheD.